A 496-amino-acid chain; its full sequence is GTPase Der (496 aa).

2 EngA-type G domains span residues 3 to 166 and 208 to 381; these read PVVA…FDNL and IKLA…RSAT. Residues 9 to 16, 56 to 60, 118 to 121, 214 to 221, 261 to 265, and 326 to 329 each bind GTP; these read GRPNVGKS, DTGGI, NKVD, DTAGV, and NKWD. The 85-residue stretch at 382-466 folds into the KH-like domain; sequence TRVGTSVLTR…PIRIQFQNSD (85 aa).

It belongs to the TRAFAC class TrmE-Era-EngA-EngB-Septin-like GTPase superfamily. EngA (Der) GTPase family. Associates with the 50S ribosomal subunit.

In terms of biological role, GTPase that plays an essential role in the late steps of ribosome biogenesis. This is GTPase Der from Vibrio vulnificus (strain CMCP6).